The following is a 283-amino-acid chain: Elongation factor Ts (283 aa).

Residues 79-82 are involved in Mg(2+) ion dislocation from EF-Tu; the sequence is TDFV.

This sequence belongs to the EF-Ts family.

The protein resides in the cytoplasm. Associates with the EF-Tu.GDP complex and induces the exchange of GDP to GTP. It remains bound to the aminoacyl-tRNA.EF-Tu.GTP complex up to the GTP hydrolysis stage on the ribosome. This chain is Elongation factor Ts, found in Shewanella amazonensis (strain ATCC BAA-1098 / SB2B).